The sequence spans 375 residues: Lipid-A-disaccharide synthase (375 aa).

It belongs to the LpxB family.

The catalysed reaction is a lipid X + a UDP-2-N,3-O-bis[(3R)-3-hydroxyacyl]-alpha-D-glucosamine = a lipid A disaccharide + UDP + H(+). It functions in the pathway bacterial outer membrane biogenesis; LPS lipid A biosynthesis. Condensation of UDP-2,3-diacylglucosamine and 2,3-diacylglucosamine-1-phosphate to form lipid A disaccharide, a precursor of lipid A, a phosphorylated glycolipid that anchors the lipopolysaccharide to the outer membrane of the cell. The chain is Lipid-A-disaccharide synthase from Pseudomonas putida (strain ATCC 700007 / DSM 6899 / JCM 31910 / BCRC 17059 / LMG 24140 / F1).